Here is a 510-residue protein sequence, read N- to C-terminus: Cobyric acid synthase (510 aa).

The GATase cobBQ-type domain maps to 249 to 458 (CFKVRVLVYP…LHGLFDSPDA (210 aa)). Cysteine 336 (nucleophile) is an active-site residue. Residue histidine 450 is part of the active site.

It belongs to the CobB/CobQ family. CobQ subfamily.

Its pathway is cofactor biosynthesis; adenosylcobalamin biosynthesis. Its function is as follows. Catalyzes amidations at positions B, D, E, and G on adenosylcobyrinic A,C-diamide. NH(2) groups are provided by glutamine, and one molecule of ATP is hydrogenolyzed for each amidation. In Shewanella oneidensis (strain ATCC 700550 / JCM 31522 / CIP 106686 / LMG 19005 / NCIMB 14063 / MR-1), this protein is Cobyric acid synthase.